The primary structure comprises 525 residues: MARKKGVKALLLNWRVLLLILFLIGSVVSMSIKGLTYGIDIGGGVALIAEPEKPVSKDTLNGIITSLQNRLNTFGVKDITIEAQHDPETGQSLIVVKIANVTLDEANQIKDLIESQGVLYMEFNGVIFATGTDVTVHSSDYGLDLQECPTCWYVGFELSGKAQNKFKKIAAGKLGWPIDIYLDPPVNSLLVVSPRVYQEMNSGDFMGAPSEGTPKPLVERLKEAFNITVVEYSNQTAEDIVENATALGKDKIILADVPEELYNDVRELVLSKDLKLRVSHYTPQQGEDLKDFVKRILNLYGPYVLKFDPAKGETTRLKLSGSAPTKEEALQEARKIYSVLRSGSLAVKLHVVSEEYISPTLGASFKKQAIIAGIGALIAVLLIVYFHYRRWRIAIPVASTSLFEVIIILGIAALIRWNLDLPSIAGIIAAIGTGVDQQIVITDELLGGTAGRVTRRMSALRRMARAFFIIFASAATTIVAMSFLLVYFVGTLKGFAVTTILGVLIGVLVTRPAYAEIAKYLLSLE.

6 helical membrane-spanning segments follow: residues 16-36, 368-388, 395-415, 421-441, 466-486, and 488-508; these read VLLLILFLIGSVVSMSIKGLT, QAIIAGIGALIAVLLIVYFHY, IPVASTSLFEVIIILGIAALI, LPSIAGIIAAIGTGVDQQIVI, AFFIIFASAATTIVAMSFLLV, and FVGTLKGFAVTTILGVLIGVL.

It belongs to the SecD/SecF family. SecD subfamily. As to quaternary structure, part of the protein translocation apparatus. Forms a complex with SecF.

It localises to the cell membrane. Functionally, involved in protein export. The chain is Protein-export membrane protein SecD from Thermococcus gammatolerans (strain DSM 15229 / JCM 11827 / EJ3).